A 36-amino-acid polypeptide reads, in one-letter code: Amanexitide proprotein 1 (36 aa).

The propeptide occupies 1-10 (MSDINTARLP). The segment at residues 11–19 (VFSLPVFFP) is a cross-link (cyclopeptide (Val-Pro)). Residues 20-36 (FVSDDIQAVLTRGESLC) constitute a propeptide that is removed on maturation.

The protein belongs to the MSDIN fungal toxin family. In terms of processing, processed by the macrocyclase-peptidase enzyme POPB to yield a toxic cyclic nonapeptide. POPB first removes 10 residues from the N-terminus. Conformational trapping of the remaining peptide forces the enzyme to release this intermediate rather than proceed to macrocyclization. The enzyme rebinds the remaining peptide in a different conformation and catalyzes macrocyclization of the N-terminal 9 residues. Expressed in basidiocarps.

Its function is as follows. Cyclic nonapeptide that belongs to the MSDIN-like toxin family responsible for a large number of food poisoning cases and deaths. This chain is Amanexitide proprotein 1, found in Amanita exitialis (Guangzhou destroying angel).